We begin with the raw amino-acid sequence, 201 residues long: MSKKPTAGPALHKVIMVGSGGVGKSALTLQFMYDEFVEDYEPTKADSYRKKVVLDGEEVQIDILDTAGQEDYAAIRDNYFRSGEGFLCVFSITDDESFQATQEFREQILRVKNDESIPFLLVGNKCDLNDKRKVPLSECQLRAQQWAVPYVETSAKTRENVDKVFFDLMREIRSRKTEDSKATSGRAKDRCKKRRLKCTLL.

18 to 25 is a binding site for GTP; the sequence is GSGGVGKS. The Effector region motif lies at 40–48; the sequence is YEPTKADSY. GTP contacts are provided by residues 65–69 and 124–127; these read DTAGQ and NKCD. Position 198 is a cysteine methyl ester (cysteine 198). A lipid anchor (S-geranylgeranyl cysteine) is attached at cysteine 198. A propeptide spans 199–201 (removed in mature form); the sequence is TLL.

It belongs to the small GTPase superfamily. Ras family.

The protein resides in the cell membrane. The protein localises to the cleavage furrow. Its subcellular location is the midbody. It is found in the midbody ring. The catalysed reaction is GTP + H2O = GDP + phosphate + H(+). The protein is Ras-related protein Ral-a (Rala) of Drosophila melanogaster (Fruit fly).